The chain runs to 153 residues: Pheromone-binding protein Gp-9 (153 aa).

The first 19 residues, 1–19 (MKTFVLHIFIFALVAFASA), serve as a signal peptide directing secretion. Disulfide bonds link cysteine 37–cysteine 77, cysteine 73–cysteine 129, and cysteine 118–cysteine 138.

This sequence belongs to the PBP/GOBP family. As to quaternary structure, homodimer.

The protein resides in the secreted. Functionally, colony queen number, a major feature of social organization, is associated with worker genotype for Gp-9. Colonies are headed by either a single reproductive queen (monogyne form) or multiple queens (polygyne form). Differences in worker Gp-9 genotypes between social forms may cause differences in workers' abilities to recognize queens and regulate their numbers. This Solenopsis interrupta (Fire ant) protein is Pheromone-binding protein Gp-9.